The chain runs to 663 residues: A-type ATP synthase subunit I (663 aa).

The next 7 membrane-spanning stretches (helical) occupy residues 376 to 396 (FFFG…IVAA), 412 to 432 (FAYI…LFGS), 468 to 488 (LAAL…GFVI), 497 to 517 (GAVF…LLAS), 534 to 554 (IALF…LMII), 568 to 588 (ARLM…NVLV), and 589 to 609 (GMVW…IIFF).

Belongs to the V-ATPase 116 kDa subunit family. In terms of assembly, has multiple subunits with at least A(3), B(3), C, D, E, F, H, I and proteolipid K(x).

The protein resides in the cell membrane. Functionally, component of the A-type ATP synthase that produces ATP from ADP in the presence of a proton gradient across the membrane. The protein is A-type ATP synthase subunit I of Thermococcus kodakarensis (strain ATCC BAA-918 / JCM 12380 / KOD1) (Pyrococcus kodakaraensis (strain KOD1)).